Here is a 107-residue protein sequence, read N- to C-terminus: Biphenyl 2,3-dioxygenase, ferredoxin component (107 aa).

Residues Thr4 to Val99 form the Rieske domain. [2Fe-2S] cluster-binding residues include Cys43, His45, Cys62, and His65.

It belongs to the bacterial ring-hydroxylating dioxygenase ferredoxin component family. The multicomponent biphenyl dioxygenase system is composed of a ferredoxin reductase (BphA4), a ferredoxin (BphA3), and a terminal oxygenase (BphA1A2). The cofactor is [2Fe-2S] cluster.

It participates in xenobiotic degradation; biphenyl degradation. Ferredoxin component of the biphenyl dioxygenase system that catalyzes the stereospecific dihydroxylation of the aromatic ring of biphenyl, yielding a dihydrodiol compound. Is likely involved in biphenyl degradation that allows growth of Rhodococcus sp. strain RHA1 on biphenyl as the sole source of carbon and energy. The dioxygenase system can also use naphtalene and 4-chlorobiphenyl (4-CB) as substrates, as well as some polychlorinated biphenyls (PCB) such as 2,2'-dichlorobiphenyl, 2,3-dichlorobiphenyl and 2,5,2'-trichlorobiphenyl. It exhibits weak activity toward dibenzofuran and dibenzo-p-dioxin. Electrons are transferred from NADH to the [2Fe-2S] cluster in BphA1 via FAD of BphA4 and [2Fe-2S] cluster of BphA3. The polypeptide is Biphenyl 2,3-dioxygenase, ferredoxin component (Rhodococcus jostii (strain RHA1)).